A 617-amino-acid polypeptide reads, in one-letter code: Proline--tRNA ligase (617 aa).

Belongs to the class-II aminoacyl-tRNA synthetase family. ProS type 1 subfamily. As to quaternary structure, homodimer.

It localises to the cytoplasm. The catalysed reaction is tRNA(Pro) + L-proline + ATP = L-prolyl-tRNA(Pro) + AMP + diphosphate. Its function is as follows. Catalyzes the attachment of proline to tRNA(Pro) in a two-step reaction: proline is first activated by ATP to form Pro-AMP and then transferred to the acceptor end of tRNA(Pro). As ProRS can inadvertently accommodate and process non-cognate amino acids such as alanine and cysteine, to avoid such errors it has two additional distinct editing activities against alanine. One activity is designated as 'pretransfer' editing and involves the tRNA(Pro)-independent hydrolysis of activated Ala-AMP. The other activity is designated 'posttransfer' editing and involves deacylation of mischarged Ala-tRNA(Pro). The misacylated Cys-tRNA(Pro) is not edited by ProRS. This chain is Proline--tRNA ligase, found in Streptococcus pneumoniae (strain ATCC BAA-255 / R6).